An 83-amino-acid chain; its full sequence is U15-theraphotoxin-Cg1a (83 aa).

An N-terminal signal peptide occupies residues 1 to 21 (MKAAILLAFAGLALLSVICHA). The propeptide occupies 22-49 (SENVEQDSFEEVFSAIFAMEDDLKPKER). Disulfide bonds link Cys-51–Cys-66, Cys-58–Cys-71, and Cys-65–Cys-77. The residue at position 81 (Ala-81) is an Alanine amide.

The protein belongs to the neurotoxin 10 (Hwtx-1) family. 66 (Jztx-24) subfamily. In terms of tissue distribution, expressed by the venom gland.

The protein localises to the secreted. In terms of biological role, probable ion channel inhibitor. The protein is U15-theraphotoxin-Cg1a of Chilobrachys guangxiensis (Chinese earth tiger tarantula).